The following is a 282-amino-acid chain: Elongation factor Ts (282 aa).

An involved in Mg(2+) ion dislocation from EF-Tu region spans residues threonine 80–valine 83.

It belongs to the EF-Ts family.

Its subcellular location is the cytoplasm. Functionally, associates with the EF-Tu.GDP complex and induces the exchange of GDP to GTP. It remains bound to the aminoacyl-tRNA.EF-Tu.GTP complex up to the GTP hydrolysis stage on the ribosome. The protein is Elongation factor Ts of Chlamydia trachomatis serovar A (strain ATCC VR-571B / DSM 19440 / HAR-13).